Consider the following 243-residue polypeptide: Uridylate kinase (243 aa).

An ATP-binding site is contributed by lysine 15 to glycine 18. The tract at residues glycine 23–glycine 28 is involved in allosteric activation by GTP. A UMP-binding site is contributed by glycine 57. ATP-binding residues include glycine 58 and arginine 62. UMP is bound by residues aspartate 77 and threonine 138–threonine 145. ATP is bound by residues threonine 165, tyrosine 171, and aspartate 174.

Belongs to the UMP kinase family. In terms of assembly, homohexamer.

It localises to the cytoplasm. It carries out the reaction UMP + ATP = UDP + ADP. It functions in the pathway pyrimidine metabolism; CTP biosynthesis via de novo pathway; UDP from UMP (UMPK route): step 1/1. With respect to regulation, allosterically activated by GTP. Inhibited by UTP. Catalyzes the reversible phosphorylation of UMP to UDP. The chain is Uridylate kinase from Shewanella denitrificans (strain OS217 / ATCC BAA-1090 / DSM 15013).